Here is a 295-residue protein sequence, read N- to C-terminus: NAD kinase (295 aa).

The active-site Proton acceptor is the aspartate 72. Residues 72-73 (DG), 146-147 (ND), arginine 157, lysine 174, aspartate 176, 187-192 (TAYALS), and glutamine 247 each bind NAD(+).

Belongs to the NAD kinase family. A divalent metal cation is required as a cofactor.

The protein localises to the cytoplasm. The catalysed reaction is NAD(+) + ATP = ADP + NADP(+) + H(+). Its function is as follows. Involved in the regulation of the intracellular balance of NAD and NADP, and is a key enzyme in the biosynthesis of NADP. Catalyzes specifically the phosphorylation on 2'-hydroxyl of the adenosine moiety of NAD to yield NADP. This is NAD kinase from Pseudomonas aeruginosa (strain LESB58).